Here is a 234-residue protein sequence, read N- to C-terminus: Core atranone cluster (CAC) protein 1 (234 aa).

It functions in the pathway mycotoxin biosynthesis. In terms of biological role, part of the core atranone cluster (CAC) which products are predicted to catalyze most or all steps of mycotoxin atranone synthesis, starting from geranylgeranyl pyrophosphate (GGPP). The initial cyclization of GGPP to dolabellane is probably performed by the terpene cyclase ATR13. The Baeyer-Villiger oxidation near the end of the atranone synthesis, which converts atranones D and E to atranones F and G is predicted to be catalyzed by the monooxygenase ATR8. Of the CAC's other predicted gene products, the reducing PKS ATR6 might synthesize a polyketide chain. This polyketide is probably transferred onto the atranone backbone by the polyketide transferase ATR5. Other predicted CAC products include 4 oxygenases (ATR2, ATR3, ATR4, and ATR14), 3 short-chain reductases (ATR7, ATR9, and ATR10), and a methyltransferase (ATR12). These may all be involved in the various steps of atranone biosynthesis, although their specific roles must await experimental determination. This chain is Core atranone cluster (CAC) protein 1, found in Stachybotrys chlorohalonatus (strain IBT 40285).